The sequence spans 165 residues: Large ribosomal subunit protein uL10 (165 aa).

This sequence belongs to the universal ribosomal protein uL10 family. Part of the ribosomal stalk of the 50S ribosomal subunit. The N-terminus interacts with L11 and the large rRNA to form the base of the stalk. The C-terminus forms an elongated spine to which L12 dimers bind in a sequential fashion forming a multimeric L10(L12)X complex.

Its function is as follows. Forms part of the ribosomal stalk, playing a central role in the interaction of the ribosome with GTP-bound translation factors. This chain is Large ribosomal subunit protein uL10, found in Hamiltonella defensa subsp. Acyrthosiphon pisum (strain 5AT).